The primary structure comprises 426 residues: Acetylglutamate kinase (426 aa).

The tract at residues 1–252 is acetylglutamate kinase; the sequence is MASAKEISQY…PLESSVSITR (252 aa). Substrate is bound by residues 59 to 60, R81, and N170; that span reads AG. Positions 253-426 are unknown; the sequence is PADLAKELFT…CATRQPTLLG (174 aa). In terms of domain architecture, N-acetyltransferase spans 274 to 425; the sequence is ERVLRATSWD…HCATRQPTLL (152 aa).

In the N-terminal section; belongs to the acetylglutamate kinase family. ArgB subfamily.

The protein localises to the cytoplasm. It carries out the reaction N-acetyl-L-glutamate + ATP = N-acetyl-L-glutamyl 5-phosphate + ADP. It participates in amino-acid biosynthesis; L-arginine biosynthesis; N(2)-acetyl-L-ornithine from L-glutamate: step 2/4. This is Acetylglutamate kinase (argB) from Xanthomonas campestris pv. campestris (strain ATCC 33913 / DSM 3586 / NCPPB 528 / LMG 568 / P 25).